A 97-amino-acid polypeptide reads, in one-letter code: Large ribosomal subunit protein bL28 (97 aa).

It belongs to the bacterial ribosomal protein bL28 family.

The polypeptide is Large ribosomal subunit protein bL28 (Brucella ovis (strain ATCC 25840 / 63/290 / NCTC 10512)).